A 316-amino-acid chain; its full sequence is Cytochrome c biogenesis protein CcsA (316 aa).

8 helical membrane-spanning segments follow: residues 9–29, 39–61, 70–90, 94–114, 143–163, 224–244, 257–271, and 289–309; these read IFVNISFVMFFFVTLLNLINL, FSKNSMTIAFFCTTGFLITRYLQ, LYESLMFLSWGFSLLYLILEV, IGLSHAVLAPGAMLIHAFATL, LISYITLLCGSLLAITLLSLF, TISLGFSLLTIGILSGAVWAN, ETWALVTWLVYAIYL, and SMGFFLVWICFLGVNLLGVGL.

Belongs to the CcmF/CycK/Ccl1/NrfE/CcsA family. May interact with Ccs1.

The protein resides in the plastid. The protein localises to the chloroplast thylakoid membrane. Required during biogenesis of c-type cytochromes (cytochrome c6 and cytochrome f) at the step of heme attachment. This is Cytochrome c biogenesis protein CcsA from Adiantum capillus-veneris (Maidenhair fern).